A 498-amino-acid polypeptide reads, in one-letter code: ATP synthase subunit beta, chloroplastic (498 aa).

172–179 lines the ATP pocket; sequence GGAGVGKT.

The protein belongs to the ATPase alpha/beta chains family. F-type ATPases have 2 components, CF(1) - the catalytic core - and CF(0) - the membrane proton channel. CF(1) has five subunits: alpha(3), beta(3), gamma(1), delta(1), epsilon(1). CF(0) has four main subunits: a(1), b(1), b'(1) and c(9-12).

The protein resides in the plastid. It is found in the chloroplast thylakoid membrane. It carries out the reaction ATP + H2O + 4 H(+)(in) = ADP + phosphate + 5 H(+)(out). In terms of biological role, produces ATP from ADP in the presence of a proton gradient across the membrane. The catalytic sites are hosted primarily by the beta subunits. This chain is ATP synthase subunit beta, chloroplastic, found in Nicotiana tabacum (Common tobacco).